A 486-amino-acid polypeptide reads, in one-letter code: Transcription factor aptf-4 (486 aa).

Disordered stretches follow at residues 25 to 49 and 150 to 173; these read CEPS…SAKM and LSTT…NQEK. Residues 150-169 are compositionally biased toward polar residues; that stretch reads LSTTSANFTPDWNTTTNGPC. An H-S-H (helix-span-helix), dimerization region spans residues 301-430; that stretch reads QRQRKVTCFS…IVEQAALYCE (130 aa).

This sequence belongs to the AP-2 family. As to quaternary structure, binds DNA as a dimer.

Its subcellular location is the nucleus. Functionally, sequence-specific DNA-binding protein that interacts with enhancer elements to regulate transcription of selected genes. Required for neuroblast and epidermal morphogenesis, perhaps acting in cooperation with transcription factor aptf-2. The chain is Transcription factor aptf-4 from Caenorhabditis elegans.